Here is a 275-residue protein sequence, read N- to C-terminus: Large ribosomal subunit protein uL2 (275 aa).

Disordered regions lie at residues 34-59 (LEKK…GGHK) and 223-275 (VAMN…RNKK).

Belongs to the universal ribosomal protein uL2 family. In terms of assembly, part of the 50S ribosomal subunit. Forms a bridge to the 30S subunit in the 70S ribosome.

In terms of biological role, one of the primary rRNA binding proteins. Required for association of the 30S and 50S subunits to form the 70S ribosome, for tRNA binding and peptide bond formation. It has been suggested to have peptidyltransferase activity; this is somewhat controversial. Makes several contacts with the 16S rRNA in the 70S ribosome. The sequence is that of Large ribosomal subunit protein uL2 from Teredinibacter turnerae (strain ATCC 39867 / T7901).